A 761-amino-acid chain; its full sequence is MGSAAELTEPTTGTEKLHQPIEVEEDDEQIVDLERKTFRHGKGHDTSVDSSTITNTSSSSSSSFSGDGGTEETPDFHSNGDGEHTDLVNLEVPELETEIVFHQEHDDGKNCIVFFDGEQGSESAGAIPDAHEESQTADLNGEQTQLEPENGSTSEDNERSREIEEVLDGDVSKDLDAVDPLAGEVIEEEVDFEDVEYHDVENMMDKQETHDLYCPNCDSCITKKVILKRRKRKIRRHELGDSKRPHLTEPLFHSEDNLPSLDGGENSANESFVFKCLSCFTIFIPKGVSSKPIPPRQGVEGLKIQPNPQVEATGDSNWFSSIFGLNKKESAIQQGGASSSVLEANPPPRESIVPVVNPSRGNLSPMRKDTTGSAVVQPDAATSIQVAKSNDTSEIVNNGAIVGDGQKFLAPMVEEQTQQKIDNDDSSTADGNHTSDKGRLSPIQPSHGMSILNTVTNGPDGLKVETTIHEEGAPLLFEGKDTPDTSTADFGLTKVTGVMDTGDRGVITGPANPEIDISAGNLLEEGSLREPLMRRVVVQGRKLEILKSIVYGGLLEAITSLGVISSAAGSGASMLNILVLGLANLLGGLILIIHNLQELREEEPIRTTTEDNQTNGREEEEGRYKRLLGRRENFTLHATVAILSFIITGILPPVVYYFSFSEKHNKDYKVASVFGASLFCIVLLAIAKAHVRYPRGSYLKSILYYGSIAVSVSGISYVVGNFLEQLLEKHGWSDGSETPVGQMMLSSLMGRKAGFGYSSSY.

Disordered regions lie at residues 1–85 and 120–162; these read MGSA…GEHT and GSES…RSRE. Positions 22-31 are enriched in acidic residues; that stretch reads EVEEDDEQIV. Low complexity predominate over residues 48–65; it reads VDSSTITNTSSSSSSSFS. A compositionally biased stretch (basic and acidic residues) spans 74 to 85; the sequence is PDFHSNGDGEHT. Residues 136-154 show a composition bias toward polar residues; sequence TADLNGEQTQLEPENGSTS. Residues 186 to 206 adopt a coiled-coil conformation; sequence IEEEVDFEDVEYHDVENMMDK. 2 disordered regions span residues 338 to 374 and 416 to 448; these read SSSV…TGSA and QTQQ…PSHG. Polar residues predominate over residues 416–432; that stretch reads QTQQKIDNDDSSTADGN. 5 helical membrane-spanning segments follow: residues 549–569, 573–593, 640–660, 670–690, and 702–722; these read IVYG…SAAG, SMLN…ILII, VAIL…YFSF, VASV…AKAH, and ILYY…VGNF.

The protein belongs to the CCC1 family.

Its subcellular location is the endoplasmic reticulum membrane. In terms of biological role, not essential for the accumulation of ER body components, including PYK10. The chain is Membrane protein of ER body-like protein (MEBL) from Arabidopsis thaliana (Mouse-ear cress).